A 503-amino-acid chain; its full sequence is Probable cytosol aminopeptidase (503 aa).

Mn(2+)-binding residues include Lys271 and Asp276. The active site involves Lys283. 3 residues coordinate Mn(2+): Asp294, Asp353, and Glu355. The active site involves Arg357.

Belongs to the peptidase M17 family. Mn(2+) serves as cofactor.

It is found in the cytoplasm. The enzyme catalyses Release of an N-terminal amino acid, Xaa-|-Yaa-, in which Xaa is preferably Leu, but may be other amino acids including Pro although not Arg or Lys, and Yaa may be Pro. Amino acid amides and methyl esters are also readily hydrolyzed, but rates on arylamides are exceedingly low.. It carries out the reaction Release of an N-terminal amino acid, preferentially leucine, but not glutamic or aspartic acids.. In terms of biological role, presumably involved in the processing and regular turnover of intracellular proteins. Catalyzes the removal of unsubstituted N-terminal amino acids from various peptides. The chain is Probable cytosol aminopeptidase from Chlorobaculum parvum (strain DSM 263 / NCIMB 8327) (Chlorobium vibrioforme subsp. thiosulfatophilum).